The following is a 96-amino-acid chain: Co-chaperonin GroES (96 aa).

The protein belongs to the GroES chaperonin family. Heptamer of 7 subunits arranged in a ring. Interacts with the chaperonin GroEL.

The protein localises to the cytoplasm. Together with the chaperonin GroEL, plays an essential role in assisting protein folding. The GroEL-GroES system forms a nano-cage that allows encapsulation of the non-native substrate proteins and provides a physical environment optimized to promote and accelerate protein folding. GroES binds to the apical surface of the GroEL ring, thereby capping the opening of the GroEL channel. The chain is Co-chaperonin GroES from Actinobacillus pleuropneumoniae serotype 5b (strain L20).